Here is a 428-residue protein sequence, read N- to C-terminus: Phosphoribosylamine--glycine ligase (428 aa).

One can recognise an ATP-grasp domain in the interval 109–316 (KDFLARHNIP…LVELCLAGTQ (208 aa)). 135–196 (VRQKGAPIVI…EEFLDGEEAS (62 aa)) provides a ligand contact to ATP. The Mg(2+) site is built by Glu-286 and Asn-288.

Belongs to the GARS family. It depends on Mg(2+) as a cofactor. Requires Mn(2+) as cofactor.

The catalysed reaction is 5-phospho-beta-D-ribosylamine + glycine + ATP = N(1)-(5-phospho-beta-D-ribosyl)glycinamide + ADP + phosphate + H(+). It functions in the pathway purine metabolism; IMP biosynthesis via de novo pathway; N(1)-(5-phospho-D-ribosyl)glycinamide from 5-phospho-alpha-D-ribose 1-diphosphate: step 2/2. This Yersinia pestis protein is Phosphoribosylamine--glycine ligase.